The sequence spans 227 residues: Large ribosomal subunit protein bL25 (227 aa).

The segment at 199–227 (AIAEAQSAEAAEEKAEESAEDEKKDGEEA) is disordered. Residues 209–227 (AEEKAEESAEDEKKDGEEA) show a composition bias toward basic and acidic residues.

It belongs to the bacterial ribosomal protein bL25 family. CTC subfamily. In terms of assembly, part of the 50S ribosomal subunit; part of the 5S rRNA/L5/L18/L25 subcomplex. Contacts the 5S rRNA. Binds to the 5S rRNA independently of L5 and L18.

Functionally, this is one of the proteins that binds to the 5S RNA in the ribosome where it forms part of the central protuberance. This chain is Large ribosomal subunit protein bL25, found in Methylobacterium radiotolerans (strain ATCC 27329 / DSM 1819 / JCM 2831 / NBRC 15690 / NCIMB 10815 / 0-1).